Reading from the N-terminus, the 812-residue chain is DNA gyrase subunit A (812 aa).

The Topo IIA-type catalytic domain occupies 31–496 (IPDVRDGLKP…GNTDFNVEDV (466 aa)). Tyrosine 119 functions as the O-(5'-phospho-DNA)-tyrosine intermediate in the catalytic mechanism. Positions 523–529 (QGRGGKG) match the GyrA-box motif.

The protein belongs to the type II topoisomerase GyrA/ParC subunit family. Heterotetramer, composed of two GyrA and two GyrB chains. In the heterotetramer, GyrA contains the active site tyrosine that forms a transient covalent intermediate with DNA, while GyrB binds cofactors and catalyzes ATP hydrolysis.

It localises to the cytoplasm. The enzyme catalyses ATP-dependent breakage, passage and rejoining of double-stranded DNA.. In terms of biological role, a type II topoisomerase that negatively supercoils closed circular double-stranded (ds) DNA in an ATP-dependent manner to modulate DNA topology and maintain chromosomes in an underwound state. Negative supercoiling favors strand separation, and DNA replication, transcription, recombination and repair, all of which involve strand separation. Also able to catalyze the interconversion of other topological isomers of dsDNA rings, including catenanes and knotted rings. Type II topoisomerases break and join 2 DNA strands simultaneously in an ATP-dependent manner. In Kosmotoga olearia (strain ATCC BAA-1733 / DSM 21960 / TBF 19.5.1), this protein is DNA gyrase subunit A.